The following is a 209-amino-acid chain: Uracil phosphoribosyltransferase (209 aa).

5-phospho-alpha-D-ribose 1-diphosphate-binding positions include arginine 79, arginine 104, and 131-139; that span reads DPMLATGGS. Residues isoleucine 194 and 199–201 contribute to the uracil site; that span reads GDA. Aspartate 200 contacts 5-phospho-alpha-D-ribose 1-diphosphate.

This sequence belongs to the UPRTase family. Mg(2+) serves as cofactor.

It catalyses the reaction UMP + diphosphate = 5-phospho-alpha-D-ribose 1-diphosphate + uracil. It functions in the pathway pyrimidine metabolism; UMP biosynthesis via salvage pathway; UMP from uracil: step 1/1. With respect to regulation, allosterically activated by GTP. In terms of biological role, catalyzes the conversion of uracil and 5-phospho-alpha-D-ribose 1-diphosphate (PRPP) to UMP and diphosphate. The chain is Uracil phosphoribosyltransferase from Bacillus velezensis (strain DSM 23117 / BGSC 10A6 / LMG 26770 / FZB42) (Bacillus amyloliquefaciens subsp. plantarum).